The primary structure comprises 932 residues: Isoleucine--tRNA ligase (932 aa).

A 'HIGH' region motif is present at residues 57–67 (PYANGNIHLGH). An L-isoleucyl-5'-AMP-binding site is contributed by E552. The short motif at 593–597 (KMSKS) is the 'KMSKS' region element. K596 is a binding site for ATP. Zn(2+) is bound by residues C889, C892, C911, and C914.

This sequence belongs to the class-I aminoacyl-tRNA synthetase family. IleS type 1 subfamily. Monomer. Zn(2+) is required as a cofactor.

The protein resides in the cytoplasm. The catalysed reaction is tRNA(Ile) + L-isoleucine + ATP = L-isoleucyl-tRNA(Ile) + AMP + diphosphate. Functionally, catalyzes the attachment of isoleucine to tRNA(Ile). As IleRS can inadvertently accommodate and process structurally similar amino acids such as valine, to avoid such errors it has two additional distinct tRNA(Ile)-dependent editing activities. One activity is designated as 'pretransfer' editing and involves the hydrolysis of activated Val-AMP. The other activity is designated 'posttransfer' editing and involves deacylation of mischarged Val-tRNA(Ile). The sequence is that of Isoleucine--tRNA ligase from Lactococcus lactis subsp. lactis (strain IL1403) (Streptococcus lactis).